The following is a 185-amino-acid chain: Probable chorismate pyruvate-lyase (185 aa).

Arginine 75, leucine 113, and glutamate 170 together coordinate substrate.

This sequence belongs to the UbiC family.

The protein resides in the cytoplasm. The enzyme catalyses chorismate = 4-hydroxybenzoate + pyruvate. Its pathway is cofactor biosynthesis; ubiquinone biosynthesis. Removes the pyruvyl group from chorismate, with concomitant aromatization of the ring, to provide 4-hydroxybenzoate (4HB) for the ubiquinone pathway. This chain is Probable chorismate pyruvate-lyase, found in Coxiella burnetii (strain RSA 493 / Nine Mile phase I).